A 229-amino-acid polypeptide reads, in one-letter code: 7-cyano-7-deazaguanine synthase (229 aa).

Residue 7–17 (LSGGLDSTTVL) participates in ATP binding. Residues Cys191, Cys204, Cys207, and Cys210 each contribute to the Zn(2+) site.

This sequence belongs to the QueC family. The cofactor is Zn(2+).

The catalysed reaction is 7-carboxy-7-deazaguanine + NH4(+) + ATP = 7-cyano-7-deazaguanine + ADP + phosphate + H2O + H(+). It participates in purine metabolism; 7-cyano-7-deazaguanine biosynthesis. In terms of biological role, catalyzes the ATP-dependent conversion of 7-carboxy-7-deazaguanine (CDG) to 7-cyano-7-deazaguanine (preQ(0)). This Cyanothece sp. (strain PCC 7425 / ATCC 29141) protein is 7-cyano-7-deazaguanine synthase.